Here is a 196-residue protein sequence, read N- to C-terminus: Ribosome maturation factor RimP (196 aa).

The segment at 164–196 (LAPQKPNKPGPKKTGHEKKKPSNESAAGKPRAE) is disordered. Positions 173 to 182 (GPKKTGHEKK) are enriched in basic residues.

Belongs to the RimP family.

The protein localises to the cytoplasm. Required for maturation of 30S ribosomal subunits. The polypeptide is Ribosome maturation factor RimP (Xanthomonas oryzae pv. oryzae (strain MAFF 311018)).